The primary structure comprises 707 residues: Metal transporter CNNM3 (707 aa).

Residues 11–27 (LGWLFAALCLGNAAGEA) form a helical membrane-spanning segment. N-linked (GlcNAc...) asparagine glycosylation is present at asparagine 73. Residues 130–308 (EAAPPWALGL…DPYSDLSKGV (179 aa)) enclose the CNNM transmembrane domain. 3 helical membrane passes run 193–213 (CALGALLLLASLAQAALAVLL), 221–241 (AVPAVLGSAGLVFLVGEVVPA), and 261–281 (LAVLLTLPVALPVGQLLELAA). CBS domains follow at residues 318 to 379 (LTPL…CTPL) and 386 to 452 (YNHP…ILDE). Serine 661 is modified (phosphoserine). The span at 678–691 (LGEKTTTAAGSSHS) shows a compositional bias: polar residues. The disordered stretch occupies residues 678-707 (LGEKTTTAAGSSHSRPGVPVEGSPGRNPGV). Position 700 is a phosphoserine (serine 700).

It belongs to the ACDP family. As to expression, widely expressed. Expressed at higher level in heart and spleen.

It localises to the cell membrane. Functionally, probable metal transporter. The chain is Metal transporter CNNM3 (CNNM3) from Homo sapiens (Human).